The primary structure comprises 521 residues: Cytochrome P450 1A1 (521 aa).

F229 is a binding site for substrate. C463 provides a ligand contact to heme.

It belongs to the cytochrome P450 family. It depends on heme as a cofactor.

It is found in the endoplasmic reticulum membrane. It localises to the microsome membrane. The enzyme catalyses an organic molecule + reduced [NADPH--hemoprotein reductase] + O2 = an alcohol + oxidized [NADPH--hemoprotein reductase] + H2O + H(+). Cytochromes P450 are a group of heme-thiolate monooxygenases. They oxidize a variety of structurally unrelated compounds, including steroids, fatty acids, and xenobiotics. This chain is Cytochrome P450 1A1 (cyp1a1), found in Limanda limanda (Common dab).